Reading from the N-terminus, the 92-residue chain is uncharacterized protein (92 aa).

The HTH cro/C1-type domain maps to 25–83 (LEEKLKQEKIDRKYLAQVTNIPYTTVSRIMRAEANREFNPEIDTILKIAKYFNCTMDEV). Residues 36–55 (RKYLAQVTNIPYTTVSRIMR) constitute a DNA-binding region (H-T-H motif).

This is an uncharacterized protein from Rickettsia prowazekii (strain Madrid E).